Reading from the N-terminus, the 192-residue chain is UPF0149 protein YgfB (192 aa).

It belongs to the UPF0149 family.

The polypeptide is UPF0149 protein YgfB (Salmonella agona (strain SL483)).